Consider the following 606-residue polypeptide: NADH-ubiquinone oxidoreductase chain 5 (606 aa).

15 consecutive transmembrane segments (helical) span residues 1–21, 43–63, 87–107, 117–137, 140–160, 171–191, 201–221, 241–261, 273–293, 310–330, 365–385, 409–429, 457–477, 488–508, and 582–602; these read MNMF…PIIM, AFMI…ETIF, MIFV…SMWY, FFKY…ANNM, LFIG…WWYG, AVLY…WFLL, IFIT…LAAT, TPVS…FLLI, IQTL…ICAL, LGLM…LHIC, VLPF…GMPF, LLIT…IMFF, LLIG…PTTI, MTAL…NLTT, and GLIK…LLIL.

It belongs to the complex I subunit 5 family. As to quaternary structure, core subunit of respiratory chain NADH dehydrogenase (Complex I) which is composed of 45 different subunits.

The protein resides in the mitochondrion inner membrane. The enzyme catalyses a ubiquinone + NADH + 5 H(+)(in) = a ubiquinol + NAD(+) + 4 H(+)(out). In terms of biological role, core subunit of the mitochondrial membrane respiratory chain NADH dehydrogenase (Complex I) which catalyzes electron transfer from NADH through the respiratory chain, using ubiquinone as an electron acceptor. Essential for the catalytic activity and assembly of complex I. This is NADH-ubiquinone oxidoreductase chain 5 (MT-ND5) from Canis lupus familiaris (Dog).